We begin with the raw amino-acid sequence, 143 residues long: Large ribosomal subunit protein uL11 (143 aa).

This sequence belongs to the universal ribosomal protein uL11 family. As to quaternary structure, part of the ribosomal stalk of the 50S ribosomal subunit. Interacts with L10 and the large rRNA to form the base of the stalk. L10 forms an elongated spine to which L12 dimers bind in a sequential fashion forming a multimeric L10(L12)X complex. Post-translationally, one or more lysine residues are methylated.

Its function is as follows. Forms part of the ribosomal stalk which helps the ribosome interact with GTP-bound translation factors. This is Large ribosomal subunit protein uL11 from Nitrosomonas eutropha (strain DSM 101675 / C91 / Nm57).